Consider the following 353-residue polypeptide: sn-glycerol-3-phosphate import ATP-binding protein UgpC (353 aa).

The 231-residue stretch at 4 to 234 (ILLNDVRKSY…PASEFVAGFI (231 aa)) folds into the ABC transporter domain. Residue 36 to 43 (GPSGCGKS) coordinates ATP.

Belongs to the ABC transporter superfamily. sn-glycerol-3-phosphate importer (TC 3.A.1.1.3) family. As to quaternary structure, the complex is composed of two ATP-binding proteins (UgpC), two transmembrane proteins (UgpA and UgpE) and a solute-binding protein (UgpB).

The protein localises to the cell inner membrane. It catalyses the reaction sn-glycerol 3-phosphate(out) + ATP + H2O = sn-glycerol 3-phosphate(in) + ADP + phosphate + H(+). Functionally, part of the ABC transporter complex UgpBAEC involved in sn-glycerol-3-phosphate (G3P) import. Responsible for energy coupling to the transport system. In Paracoccus denitrificans (strain Pd 1222), this protein is sn-glycerol-3-phosphate import ATP-binding protein UgpC.